We begin with the raw amino-acid sequence, 233 residues long: Large ribosomal subunit protein uL1 (233 aa).

The protein belongs to the universal ribosomal protein uL1 family. Part of the 50S ribosomal subunit.

Functionally, binds directly to 23S rRNA. The L1 stalk is quite mobile in the ribosome, and is involved in E site tRNA release. Protein L1 is also a translational repressor protein, it controls the translation of the L11 operon by binding to its mRNA. This is Large ribosomal subunit protein uL1 from Shewanella halifaxensis (strain HAW-EB4).